We begin with the raw amino-acid sequence, 487 residues long: Ribosome biogenesis protein YTM1 (487 aa).

Residues 13-95 are ubiquitin-like (UBL) domain; the sequence is VKVTFTTNEA…ETNLTLQYVR (83 aa). 5 WD repeats span residues 122–161, 168–206, 217–256, 379–419, and 451–487; these read SPAG…LVTA, GHSA…ASGQ, GHRA…SPEA, GHTN…PASG, and GEGA…VVRE. The disordered stretch occupies residues 253-277; it reads SPEADASLLPNAHTSKRRKVASSVT.

The protein belongs to the WD repeat WDR12/YTM1 family. As to quaternary structure, component of the NOP7 complex, composed of ERB1, NOP7 and YTM1. The complex is held together by ERB1, which interacts with NOP7 via its N-terminal domain and with YTM1 via a high-affinity interaction between the seven-bladed beta-propeller domains of the 2 proteins. The NOP7 complex associates with the 66S pre-ribosome. Interacts (via UBL domain) with MDN1 (via VWFA/MIDAS domain).

It is found in the nucleus. It localises to the nucleolus. The protein localises to the nucleoplasm. Functionally, component of the NOP7 complex, which is required for maturation of the 25S and 5.8S ribosomal RNAs and formation of the 60S ribosome. In Podospora anserina (strain S / ATCC MYA-4624 / DSM 980 / FGSC 10383) (Pleurage anserina), this protein is Ribosome biogenesis protein YTM1.